Consider the following 176-residue polypeptide: Cathelicidin-2 (176 aa).

The first 29 residues, 1–29, serve as a signal peptide directing secretion; it reads METQRASLSLGRCSLWLLLLGLVLPSASA. Position 30 is a pyrrolidone carboxylic acid (glutamine 30). The propeptide occupies 30–130; that stretch reads QALSYREAVL…DINCNELQSV (101 aa). 2 disulfides stabilise this stretch: cysteine 85-cysteine 96 and cysteine 107-cysteine 124. The tract at residues 157–176 is disordered; the sequence is IFPPIRPPFRPPLGPFPGRR. The residue at position 173 (proline 173) is a Proline amide. A propeptide spans 174 to 176 (removed in mature form); sequence GRR.

This sequence belongs to the cathelicidin family. In terms of processing, elastase is responsible for its maturation. In terms of tissue distribution, large granules of neutrophils.

Its subcellular location is the secreted. Functionally, exerts, in vitro, a potent antimicrobial activity. Probably due to an impairment of the function of the respiratory chain and of energy-dependent activities in the inner membrane of susceptible microorganisms. The sequence is that of Cathelicidin-2 (CATHL2) from Bos taurus (Bovine).